We begin with the raw amino-acid sequence, 436 residues long: Gustatory receptor for sugar taste 61a (436 aa).

Topologically, residues 1–78 are cytoplasmic; sequence MSRTSDDIRK…PQDVKFKVRS (78 aa). Residues 79-99 traverse the membrane as a helical segment; sequence IGLAVTGLFLLLGGMKTLVGA. The Extracellular portion of the chain corresponds to 100 to 111; sequence NILFTEGLNAKN. Residues 112–132 traverse the membrane as a helical segment; that stretch reads IVGLVFLIVGMVNWLNFVGFA. Residues 133-164 lie on the Cytoplasmic side of the membrane; that stretch reads RSWSHIMLPWSSVDILMLFPPYKRGKRSLRSK. A helical membrane pass occupies residues 165-185; that stretch reads VNVLALSVVVLAVGDHMLYYA. At 186–214 the chain is on the extracellular side; it reads SGYCSYSMHILQCHTNHSRITFGLYLEKE. The N-linked (GlcNAc...) asparagine glycan is linked to N201. Residues 215 to 235 traverse the membrane as a helical segment; it reads FSDIMFIMPFNIFSMCYGFWL. Residues 236–237 lie on the Cytoplasmic side of the membrane; it reads NG. Residues 238–258 form a helical membrane-spanning segment; sequence AFTFLWNFMDIFIVMTSIGLA. At 259-304 the chain is on the extracellular side; sequence QRFQQFAARVGALEGRHVPEALWYDIRRDHIRLCELASLVEASMSN. The helical transmembrane segment at 305–325 threads the bilayer; that stretch reads IVFVSCANNVYVICNQALAIF. Topologically, residues 326 to 334 are cytoplasmic; sequence TKLRHPINY. A helical membrane pass occupies residues 335-355; sequence VYFWYSLIFLLARTSLVFMTA. The Extracellular portion of the chain corresponds to 356-436; sequence SKIHDASLLP…AKSHKGLRCA (81 aa).

Belongs to the insect chemoreceptor superfamily. Gustatory receptor (GR) family. Gr5a subfamily. Expressed in sweet sensing neurons of classical chemosensory sensilla, but also in two supersensitive neurons of atypical taste sensilla.

The protein localises to the cell membrane. In terms of biological role, one of the few identified sugar gustatory receptors identified so far with glucose being its primary ligand and which mediates acceptance behavior. This chain is Gustatory receptor for sugar taste 61a (Gr61a), found in Drosophila melanogaster (Fruit fly).